The following is a 203-amino-acid chain: Molybdenum cofactor guanylyltransferase (203 aa).

Residues 12–14, Lys-25, Asn-53, Asp-71, and Asp-101 contribute to the GTP site; that span reads LAG. Residue Asp-101 participates in Mg(2+) binding.

It belongs to the MobA family. As to quaternary structure, monomer. It depends on Mg(2+) as a cofactor.

Its subcellular location is the cytoplasm. The enzyme catalyses Mo-molybdopterin + GTP + H(+) = Mo-molybdopterin guanine dinucleotide + diphosphate. In terms of biological role, transfers a GMP moiety from GTP to Mo-molybdopterin (Mo-MPT) cofactor (Moco or molybdenum cofactor) to form Mo-molybdopterin guanine dinucleotide (Mo-MGD) cofactor. The sequence is that of Molybdenum cofactor guanylyltransferase from Methylibium petroleiphilum (strain ATCC BAA-1232 / LMG 22953 / PM1).